The chain runs to 242 residues: Phosphoribosylaminoimidazole-succinocarboxamide synthase (242 aa).

It belongs to the SAICAR synthetase family.

The enzyme catalyses 5-amino-1-(5-phospho-D-ribosyl)imidazole-4-carboxylate + L-aspartate + ATP = (2S)-2-[5-amino-1-(5-phospho-beta-D-ribosyl)imidazole-4-carboxamido]succinate + ADP + phosphate + 2 H(+). It participates in purine metabolism; IMP biosynthesis via de novo pathway; 5-amino-1-(5-phospho-D-ribosyl)imidazole-4-carboxamide from 5-amino-1-(5-phospho-D-ribosyl)imidazole-4-carboxylate: step 1/2. The sequence is that of Phosphoribosylaminoimidazole-succinocarboxamide synthase from Ehrlichia chaffeensis (strain ATCC CRL-10679 / Arkansas).